A 466-amino-acid chain; its full sequence is UPF0652 protein C16A11.03c (466 aa).

It belongs to the UPF0652 family.

Its subcellular location is the cytoplasm. It localises to the nucleus. The polypeptide is UPF0652 protein C16A11.03c (Schizosaccharomyces pombe (strain 972 / ATCC 24843) (Fission yeast)).